Here is a 576-residue protein sequence, read N- to C-terminus: Sulfite reductase [NADPH] hemoprotein beta-component (576 aa).

[4Fe-4S] cluster-binding residues include Cys435, Cys441, Cys480, and Cys484. Cys484 provides a ligand contact to siroheme.

This sequence belongs to the nitrite and sulfite reductase 4Fe-4S domain family. As to quaternary structure, alpha(8)-beta(8). The alpha component is a flavoprotein, the beta component is a hemoprotein. Siroheme is required as a cofactor. It depends on [4Fe-4S] cluster as a cofactor.

It catalyses the reaction hydrogen sulfide + 3 NADP(+) + 3 H2O = sulfite + 3 NADPH + 4 H(+). Its pathway is sulfur metabolism; hydrogen sulfide biosynthesis; hydrogen sulfide from sulfite (NADPH route): step 1/1. In terms of biological role, component of the sulfite reductase complex that catalyzes the 6-electron reduction of sulfite to sulfide. This is one of several activities required for the biosynthesis of L-cysteine from sulfate. The polypeptide is Sulfite reductase [NADPH] hemoprotein beta-component (Yersinia pseudotuberculosis serotype O:1b (strain IP 31758)).